A 417-amino-acid polypeptide reads, in one-letter code: MAEIKNYTLNFGPQHPAAHGVLRLVLELDGEVIQRADPHIGLLHRATEKLAENKTFIQSVPYMDRLDYVSMMVNEHGYVLAIEKLLGIAVPERAQYIRVLFDEITRVLNHLMWIGAHALDVGAMAVFLYAFREREDLMDVYEAVSGARMHAAYYRPGGVYRDLPDAMPQYKASKIRNEKALAKMNEARSGSVLDFIDDFFTRFPKCIDEYETLLTDNRIWKQRLVGIGVVSPERALQMGLTGPMLRGSGIAWDLRKKQPYEVYDRMDFDVPVGVNGDCYDRYLVRVEEMRQSVRIAKQCIEWLRKNPGPVMTDNHKVAPPSRVGMKTNMEDLIHHFKLFTEGFHVPEGEAYAAVEHPKGEFGIYLVSDGANKPYRLKIRAPGFAHLASLDEMARGHMIADAVTIIGTQDIVFGEIDR.

This sequence belongs to the complex I 49 kDa subunit family. In terms of assembly, NDH-1 is composed of 14 different subunits. Subunits NuoB, C, D, E, F, and G constitute the peripheral sector of the complex.

Its subcellular location is the cell inner membrane. The catalysed reaction is a quinone + NADH + 5 H(+)(in) = a quinol + NAD(+) + 4 H(+)(out). NDH-1 shuttles electrons from NADH, via FMN and iron-sulfur (Fe-S) centers, to quinones in the respiratory chain. The immediate electron acceptor for the enzyme in this species is believed to be ubiquinone. Couples the redox reaction to proton translocation (for every two electrons transferred, four hydrogen ions are translocated across the cytoplasmic membrane), and thus conserves the redox energy in a proton gradient. The polypeptide is NADH-quinone oxidoreductase subunit D (Burkholderia multivorans (strain ATCC 17616 / 249)).